We begin with the raw amino-acid sequence, 162 residues long: Disulfide bond formation protein B (162 aa).

Over 1 to 8 (MTPLFRKA) the chain is Cytoplasmic. A helical membrane pass occupies residues 9–25 (VWLLFAVSVCAFAGSLA). At 26–43 (AQYVLGMEPCVLCISQRL) the chain is on the periplasmic side. C35 and C38 are disulfide-bonded. A helical membrane pass occupies residues 44–60 (CVLATALCTAIVLMCRP). Over 61 to 67 (RRRAGGL) the chain is Cytoplasmic. A helical membrane pass occupies residues 68 to 85 (FGAVFISIPAVTGISVAA). The Periplasmic segment spans residues 86–141 (YQLWLQSLPPGTAPSCGAPWTFRLKGWPLFDWFEPVVRGFGNCAEPDYLLGIALPV). C101 and C128 are oxidised to a cystine. The chain crosses the membrane as a helical span at residues 142–160 (WSVAYFLAVVLTVWWAWAR). The Cytoplasmic portion of the chain corresponds to 161–162 (AK).

Belongs to the DsbB family.

The protein localises to the cell inner membrane. In terms of biological role, required for disulfide bond formation in some periplasmic proteins. Acts by oxidizing the DsbA protein. The polypeptide is Disulfide bond formation protein B (Neisseria meningitidis serogroup B (strain ATCC BAA-335 / MC58)).